The primary structure comprises 459 residues: Serine carboxypeptidase-like 27 (459 aa).

The N-terminal stretch at 1 to 20 is a signal peptide; the sequence is MDYSFLLIILLLTISTSCCA. 3 disulfides stabilise this stretch: C91–C344, C252–C264, and C288–C312. The N-linked (GlcNAc...) asparagine glycan is linked to N142. S184 is an active-site residue. N289 and N333 each carry an N-linked (GlcNAc...) asparagine glycan. Active-site residues include D381 and H433.

Belongs to the peptidase S10 family. In terms of tissue distribution, ubiquitous.

It is found in the secreted. In terms of biological role, probable carboxypeptidase. The protein is Serine carboxypeptidase-like 27 (SCPL27) of Arabidopsis thaliana (Mouse-ear cress).